A 354-amino-acid chain; its full sequence is MISKFIEKRMLNMLDEWYSAMSKRKMNHVCTLKEKIDQHLPKIKKNTKLWMRYQLFQARHQLLFENQNGLDSLFDGLYGLEDKMDDELKYYLYFFSGLYEMVKTAPKHAVHHFKKAEQYLAAIHNTFEAADLYYQTAGAYYLMKSPPLSVQYVKKALHIYLHQFGYIKKVITCKLLLAVNYIDQERYEKAEQLFKEIIKKTQQLHDENLLCHAYYNLGFLKATEKKDQEALLYFRKVLKNQEFEMNSPVSYLHCVYESVRALFKTGNITEAKAVLQKGKELSEKVDIQTIYLKLKTLEALYTSAEDPYEQLLEYVLELEKIEAWVDLEVLLEDITEYYKKKDDFEKAAFFIMRG.

6 TPR repeats span residues 64 to 105 (FENQ…VKTA), 107 to 126 (KHAV…IHNT), 130 to 163 (ADLY…YLHQ), 171 to 204 (ITCK…TQQL), 211 to 244 (CHAY…QEFE), and 321 to 353 (IEAW…FIMR).

The protein belongs to the Rap family.

The protein localises to the cytoplasm. The polypeptide is Regulatory protein RapD (rapD) (Bacillus subtilis (strain 168)).